A 490-amino-acid polypeptide reads, in one-letter code: Solute carrier family 2, facilitated glucose transporter member 1 (490 aa).

Residues 1-10 are Cytoplasmic-facing; it reads MESGSKMTAR. A helical membrane pass occupies residues 11–32; it reads LMLAVGGAVLGSLQFGYNTGVI. Over 33-65 the chain is Extracellular; sequence NRPQKVIEDFYNHTWLYRYEEPISPATLTTLWS. The N-linked (GlcNAc...) asparagine glycan is linked to asparagine 44. A helical transmembrane segment spans residues 66–86; sequence LSVAIFSVGGMIGSFSVGLFV. Topologically, residues 87–89 are cytoplasmic; the sequence is NRF. Residues 90–111 traverse the membrane as a helical segment; that stretch reads GRRNSMLMSNILAFLAAVLMGF. Residues 112–119 lie on the Extracellular side of the membrane; that stretch reads SKMALSFE. Residues 120–143 traverse the membrane as a helical segment; sequence MLILGRFIIGLYSGLTTGFVPMYV. The Cytoplasmic segment spans residues 144–154; the sequence is GEVSPTALRGA. A helical membrane pass occupies residues 155-175; sequence LGTFHQLGIVLGILIAQVFGL. Residue glutamine 160 coordinates D-glucose. The Extracellular portion of the chain corresponds to 176–184; the sequence is DLIMGNDSL. A helical transmembrane segment spans residues 185 to 205; the sequence is WPLLLGFIFVPALLQCIILPF. The Cytoplasmic portion of the chain corresponds to 206-270; it reads APESPRFLLI…LFRSPMYRQP (65 aa). A helical transmembrane segment spans residues 271–292; that stretch reads ILIAIVLQLSQQLSGINAVFYY. D-glucose contacts are provided by residues 281–282 and asparagine 287; that span reads QQ. Topologically, residues 293–305 are extracellular; sequence STSIFEKSGVEQP. A helical membrane pass occupies residues 306–327; that stretch reads VYATIGSGVVNTAFTVVSLFVV. A D-glucose-binding site is contributed by asparagine 316. Topologically, residues 328 to 333 are cytoplasmic; the sequence is ERAGRR. The chain crosses the membrane as a helical span at residues 334-354; the sequence is TLHLIGLAGMAGCAILMTIAL. The Extracellular segment spans residues 355 to 364; that stretch reads TLLDQMPWMS. Residues 365-387 traverse the membrane as a helical segment; the sequence is YLSIVAIFGFVAFFEIGPGPIPW. 2 residues coordinate D-glucose: glutamate 379 and tryptophan 387. At 388 to 400 the chain is on the cytoplasmic side; the sequence is FIVAELFSQGPRP. A helical transmembrane segment spans residues 401–421; it reads AAFAVAGLSNWTSNFIVGMGF. Over 422-428 the chain is Extracellular; the sequence is QYIAQLC. A helical transmembrane segment spans residues 429 to 449; that stretch reads GSYVFIIFTVLLVLFFIFTYF. At 450-490 the chain is on the cytoplasmic side; sequence KVPETKGRTFDEIAYRFRQGGASQSDKTPDEFHSLGADSQV. Positions 470 to 490 are disordered; it reads GASQSDKTPDEFHSLGADSQV.

Belongs to the major facilitator superfamily. Sugar transporter (TC 2.A.1.1) family. Glucose transporter subfamily. As to quaternary structure, interacts with isoform 1 of BSG. In terms of tissue distribution, retinal cones (at protein level).

The protein resides in the cell membrane. Its subcellular location is the photoreceptor inner segment. The catalysed reaction is D-glucose(out) = D-glucose(in). Its function is as follows. Facilitative glucose transporter, which is responsible for constitutive or basal glucose uptake. Has a very broad substrate specificity; can transport a wide range of aldoses including both pentoses and hexoses. Most important energy carrier of the brain: present at the blood-brain barrier and assures the energy-independent, facilitative transport of glucose into the brain. In association with BSG and NXNL1, promotes retinal cone survival by increasing glucose uptake into photoreceptors. Required for mesendoderm differentiation. The polypeptide is Solute carrier family 2, facilitated glucose transporter member 1 (Gallus gallus (Chicken)).